Consider the following 330-residue polypeptide: Lipoyl synthase (330 aa).

Cys-55, Cys-60, Cys-66, Cys-81, Cys-85, Cys-88, and Ser-292 together coordinate [4Fe-4S] cluster. In terms of domain architecture, Radical SAM core spans 67–281 (WEDREATFLI…AEEAREIGFV (215 aa)).

It belongs to the radical SAM superfamily. Lipoyl synthase family. Requires [4Fe-4S] cluster as cofactor.

The protein localises to the cytoplasm. The enzyme catalyses [[Fe-S] cluster scaffold protein carrying a second [4Fe-4S](2+) cluster] + N(6)-octanoyl-L-lysyl-[protein] + 2 oxidized [2Fe-2S]-[ferredoxin] + 2 S-adenosyl-L-methionine + 4 H(+) = [[Fe-S] cluster scaffold protein] + N(6)-[(R)-dihydrolipoyl]-L-lysyl-[protein] + 4 Fe(3+) + 2 hydrogen sulfide + 2 5'-deoxyadenosine + 2 L-methionine + 2 reduced [2Fe-2S]-[ferredoxin]. It functions in the pathway protein modification; protein lipoylation via endogenous pathway; protein N(6)-(lipoyl)lysine from octanoyl-[acyl-carrier-protein]: step 2/2. Functionally, catalyzes the radical-mediated insertion of two sulfur atoms into the C-6 and C-8 positions of the octanoyl moiety bound to the lipoyl domains of lipoate-dependent enzymes, thereby converting the octanoylated domains into lipoylated derivatives. The sequence is that of Lipoyl synthase from Cutibacterium acnes (strain DSM 16379 / KPA171202) (Propionibacterium acnes).